The sequence spans 369 residues: Protein DUF642 L-GALACTONO-1,4-LACTONE-RESPONSIVE GENE 2 (369 aa).

Positions 1-19 are cleaved as a signal peptide; it reads MEGVTVVSFFLLFIATAMA. N-linked (GlcNAc...) asparagine glycosylation is present at N125.

Expressed in roots, seedlings and leaves.

Its subcellular location is the secreted. The protein resides in the cell wall. Involved in the regulation of testa rupture during seed germination. Required during roots and rosettes development. This Arabidopsis thaliana (Mouse-ear cress) protein is Protein DUF642 L-GALACTONO-1,4-LACTONE-RESPONSIVE GENE 2.